Reading from the N-terminus, the 898-residue chain is Methionine--tRNA ligase, cytoplasmic (898 aa).

In terms of domain architecture, GST C-terminal spans 74–198 (GWEQDDLTNQ…VLKQQGVLAL (125 aa)). The 'HIGH' region motif lies at 273 to 283 (PYVNNVPHLGN). Residues 593 to 597 (KFSKS) carry the 'KMSKS' region motif. Lys596 serves as a coordination point for ATP. Position 825 is a phosphoserine (Ser825). Residue Thr833 is modified to Phosphothreonine. The WHEP-TRS domain occupies 839-895 (QIQALTEEVTKQGNIVRELKAQKADKNQIAAEVAKLLDLKKQLALAEGKPLETSKGK).

This sequence belongs to the class-I aminoacyl-tRNA synthetase family. Monomer. Part of a multisubunit complex that groups tRNA ligases for Arg (RARS1), Asp (DARS1), Gln (QARS1), Ile (IARS1), Leu (LARS1), Lys (KARS1), Met (MARS1) the bifunctional ligase for Glu and Pro (EPRS1) and the auxiliary subunits AIMP1/p43, AIMP2/p38 and EEF1E1/p18. Forms a linear complex that contains MARS1, EEF1E1, EPRS1 and AIMP2 that is at the core of the multisubunit complex.

It localises to the cytoplasm. It is found in the cytosol. The protein resides in the nucleus. The protein localises to the nucleolus. It carries out the reaction tRNA(Met) + L-methionine + ATP = L-methionyl-tRNA(Met) + AMP + diphosphate. Functionally, catalyzes the specific attachment of an amino acid to its cognate tRNA in a 2 step reaction: the amino acid (AA) is first activated by ATP to form AA-AMP and then transferred to the acceptor end of the tRNA. Plays a role in the synthesis of ribosomal RNA in the nucleolus. The polypeptide is Methionine--tRNA ligase, cytoplasmic (MARS1) (Bos taurus (Bovine)).